A 313-amino-acid polypeptide reads, in one-letter code: Protein FixB (313 aa).

255 to 283 (LYLAVGISGQIQHMVGANGAQTIFAINKD) provides a ligand contact to FAD.

The protein belongs to the ETF alpha-subunit/FixB family. In terms of assembly, heterodimer of FixA and FixB.

It functions in the pathway amine and polyamine metabolism; carnitine metabolism. Required for anaerobic carnitine reduction. May bring reductant to CaiA. This chain is Protein FixB, found in Salmonella agona (strain SL483).